Reading from the N-terminus, the 155-residue chain is F-box only protein 48 (155 aa).

A disordered region spans residues 1-27 (MHKNSKRNNNLRVSHTEANSVDAEKEK). The span at 7 to 19 (RNNNLRVSHTEAN) shows a compositional bias: polar residues. In terms of domain architecture, F-box spans 32–79 (NNFFELLPAEITFKIFSQLDIRSLCRASLTCRSWNDTIRNSDSLWKPH).

The protein is F-box only protein 48 (FBXO48) of Homo sapiens (Human).